Consider the following 819-residue polypeptide: Myosin light chain kinase 3 (819 aa).

Positions 146-460 are disordered; that stretch reads VPWRRGSPGD…PGVGNPEPEQ (315 aa). Residue Ser152 is modified to Phosphoserine. Composition is skewed to basic and acidic residues over residues 158 to 170 and 183 to 196; these read EENK…EGAK and DARE…KADV. Positions 307–318 are enriched in pro residues; that stretch reads GPGPQCPGPPGL. Residues Ser355, Ser401, and Ser408 each carry the phosphoserine modification. Residues 515-770 enclose the Protein kinase domain; that stretch reads VCQHEVLGGG…ATQCLKHEWL (256 aa). ATP-binding positions include 521–529 and Lys544; that span reads LGGGRFGQV. Asp636 acts as the Proton acceptor in catalysis.

It belongs to the protein kinase superfamily. CAMK Ser/Thr protein kinase family. Requires Mg(2+) as cofactor. Phosphorylated on serine residues.

The protein localises to the cytoplasm. The enzyme catalyses L-seryl-[myosin light chain] + ATP = O-phospho-L-seryl-[myosin light chain] + ADP + H(+). It catalyses the reaction L-threonyl-[myosin light chain] + ATP = O-phospho-L-threonyl-[myosin light chain] + ADP + H(+). In terms of biological role, kinase that phosphorylates MYL2 in vitro. Promotes sarcomere formation in cardiomyocytes and increases cardiomyocyte contractility. This Pongo abelii (Sumatran orangutan) protein is Myosin light chain kinase 3 (MYLK3).